The primary structure comprises 86 residues: Large ribosomal subunit protein eL43 (86 aa).

Zn(2+)-binding residues include C40, C43, C58, and C61. The C4-type zinc finger occupies 40-61 (CPFCRSKAVIREAYGIYRCKKC).

Belongs to the eukaryotic ribosomal protein eL43 family. Putative zinc-binding subfamily. As to quaternary structure, part of the 50S ribosomal subunit. Zn(2+) serves as cofactor.

Its function is as follows. Binds to the 23S rRNA. The polypeptide is Large ribosomal subunit protein eL43 (Nanoarchaeum equitans (strain Kin4-M)).